The chain runs to 361 residues: G-protein coupled receptor 183 (361 aa).

The Extracellular segment spans residues 1 to 31 (MDIQMANNFTPPSATPQGNDCDLYAHHSTAR). A helical transmembrane segment spans residues 32 to 57 (IVMPLHYSLVFIIGLVGNLLALVVIV). At 58 to 77 (QNRKKINSTTLYSTNLVISD) the chain is on the cytoplasmic side. Residues 78-95 (ILFTTALPTRIAYYAMGF) traverse the membrane as a helical segment. 7alpha,25-dihydroxycholesterol is bound at residue Arg-87. Residues 96 to 105 (DWRIGDALCR) lie on the Extracellular side of the membrane. Cys-104 and Cys-181 are joined by a disulfide. The helical transmembrane segment at 106–127 (ITALVFYINTYAGVNFMTCLSI) threads the bilayer. Residues Tyr-112 and Tyr-116 each coordinate 7alpha,25-dihydroxycholesterol. The segment at 126–134 (SIDRFIAVV) is interaction with G proteins. At 128 to 149 (DRFIAVVHPLRYNKIKRIEHAK) the chain is on the cytoplasmic side. The helical transmembrane segment at 150–168 (GVCIFVWILVFAQTLPLLI) threads the bilayer. The Extracellular segment spans residues 169-192 (NPMSKQEAERITCMEYPNFEETKS). The helical transmembrane segment at 193 to 215 (LPWILLGACFIGYVLPLIIILIC) threads the bilayer. Residues 216-241 (YSQICCKLFRTAKQNPLTEKSGVNKK) are Cytoplasmic-facing. A helical transmembrane segment spans residues 242 to 265 (ALNTIILIIVVFVLCFTPYHVAII). A 7alpha,25-dihydroxycholesterol-binding site is contributed by Tyr-260. The Extracellular segment spans residues 266–287 (QHMIKKLRFSNFLECSQRHSFQ). A helical membrane pass occupies residues 288-312 (ISLHFTVCLMNFNCCMDPFIYFFAC). Residues 313-361 (KGYKRKVMRMLKRQVSVSISSAVKSAPEENSREMTETQMMIHSKSSNGK) lie on the Cytoplasmic side of the membrane. Ser-328 carries the phosphoserine modification. The disordered stretch occupies residues 340–361 (EENSREMTETQMMIHSKSSNGK). Positions 348-361 (ETQMMIHSKSSNGK) are enriched in polar residues.

It belongs to the G-protein coupled receptor 1 family. As to quaternary structure, homodimer and heterodimer. Heterodimerizes with CXCR5; leading to modulate the interaction between of CXCL13 and CXCR5. As to expression, expressed abundantly in lymphoid tissues such as spleen and lymph node, and in B- and T-lymphocytes. Also highly expressed in lung, heart and gastrointestinal tract, and weakly expressed in the urogenital system and brain. Expressed in astrocytes.

It is found in the cell membrane. G-protein coupled receptor expressed in lymphocytes that acts as a chemotactic receptor for B-cells, T-cells, splenic dendritic cells, monocytes/macrophages and astrocytes. Receptor for oxysterol 7-alpha,25-dihydroxycholesterol (7-alpha,25-OHC) and other related oxysterols. Mediates cell positioning and movement of a number of cells by binding the 7-alpha,25-OHC ligand that forms a chemotactic gradient. Binding of 7-alpha,25-OHC mediates the correct localization of B-cells during humoral immune responses. Guides B-cell movement along the B-cell zone-T-cell zone boundary and later to interfollicular and outer follicular regions. Its specific expression during B-cell maturation helps position B-cells appropriately for mounting T-dependent antibody responses. Collaborates with CXCR5 to mediate B-cell migration; probably by forming a heterodimer with CXCR5 that affects the interaction between of CXCL13 and CXCR5. Also acts as a chemotactic receptor for some T-cells upon binding to 7-alpha,25-OHC ligand. Promotes follicular helper T (Tfh) cells differentiation by positioning activated T-cells at the follicle-T-zone interface, promoting contact of newly activated CD4 T-cells with activated dendritic cells and exposing them to Tfh-cell-promoting inducible costimulator (ICOS) ligand. Expression in splenic dendritic cells is required for their homeostasis, localization and ability to induce B- and T-cell responses: GPR183 acts as a chemotactic receptor in dendritic cells that mediates the accumulation of CD4(+) dendritic cells in bridging channels. Regulates migration of astrocytes and is involved in communication between astrocytes and macrophages. Promotes osteoclast precursor migration to bone surfaces. Signals constitutively through G(i)-alpha, but not G(s)-alpha or G(q)-alpha. Signals constitutively also via MAPK1/3 (ERK1/2). The protein is G-protein coupled receptor 183 of Homo sapiens (Human).